Here is a 158-residue protein sequence, read N- to C-terminus: MNQSCPNKTSFKIAFIQARWHADIVDEARKSFVAELAAKTGGSVEVEIFDVPGAYEIPLHAKTLARTGRYAAIVGAAFVIDGGIYRHDFVATAVINGMMQVQLETEVPVLSVVLTPHHFHESKEHHDFFHAHFKVKGVEAAHAALQIVSERSRIAALV.

5-amino-6-(D-ribitylamino)uracil contacts are provided by residues W20, 54–56 (AYE), and 78–80 (FVI). R86 serves as the catalytic Proton donor. Position 111 (S111) interacts with 5-amino-6-(D-ribitylamino)uracil. H125 serves as a coordination point for (2S)-2-hydroxy-3-oxobutyl phosphate.

The protein belongs to the DMRL synthase family. Homodecamer, arranged as a dimer of pentamers.

It is found in the cytoplasm. It catalyses the reaction (2S)-2-hydroxy-3-oxobutyl phosphate + 5-amino-6-(D-ribitylamino)uracil = 6,7-dimethyl-8-(1-D-ribityl)lumazine + phosphate + 2 H2O + H(+). Its pathway is cofactor biosynthesis; riboflavin biosynthesis; riboflavin from 2-hydroxy-3-oxobutyl phosphate and 5-amino-6-(D-ribitylamino)uracil: step 1/2. Its function is as follows. Catalyzes the formation of 6,7-dimethyl-8-ribityllumazine by condensation of 5-amino-6-(D-ribitylamino)uracil with 3,4-dihydroxy-2-butanone 4-phosphate. This is the penultimate step in the biosynthesis of riboflavin. The isozyme RibH2 but not RibH1 is essential for Brucella intracellular survival and replication inside macrophages or in mice. Displays low catalytic activity in comparison with the isozyme RibH1. Is a highly immunogenic protein. Activates dendritic cells (DCs) in vitro, increasing the levels of costimulatory molecules and the secretion of pro-inflammatory cytokines, and recruits DCs, B cells and CD8+ T cells in vivo, both effects in a TLR4-dependent manner. Induces the cross presentation of covalently attached peptides and generates a strong and long-lasting humoral immune response without adjuvants; TLR4 signaling is necessary for the induction of the cytotoxic response but not for antigen cross presentation. Elicits a TLR4-mediated protective response against B16 melanoma in mice, slowing tumor growth and prolonging mice survival. The protein is 6,7-dimethyl-8-ribityllumazine synthase 2 of Brucella abortus (strain 2308).